The chain runs to 105 residues: Large ribosomal subunit protein uL24 (105 aa).

Residues 40 to 61 (RIKKHTPQSANERGASSGGIVT) form a disordered region.

It belongs to the universal ribosomal protein uL24 family. As to quaternary structure, part of the 50S ribosomal subunit.

In terms of biological role, one of two assembly initiator proteins, it binds directly to the 5'-end of the 23S rRNA, where it nucleates assembly of the 50S subunit. Its function is as follows. One of the proteins that surrounds the polypeptide exit tunnel on the outside of the subunit. This is Large ribosomal subunit protein uL24 from Mycobacteroides abscessus (strain ATCC 19977 / DSM 44196 / CCUG 20993 / CIP 104536 / JCM 13569 / NCTC 13031 / TMC 1543 / L948) (Mycobacterium abscessus).